The chain runs to 515 residues: 2-isopropylmalate synthase (515 aa).

Residues 5 to 267 form the Pyruvate carboxyltransferase domain; that stretch reads VIIFDTTLRD…RTGINHEEIH (263 aa). Mn(2+)-binding residues include Asp14, His202, His204, and Asn238. The segment at 392–515 is regulatory domain; that stretch reads KLNYLSVQSG…EMKQKKIATV (124 aa).

This sequence belongs to the alpha-IPM synthase/homocitrate synthase family. LeuA type 1 subfamily. Homodimer. The cofactor is Mn(2+).

It is found in the cytoplasm. It catalyses the reaction 3-methyl-2-oxobutanoate + acetyl-CoA + H2O = (2S)-2-isopropylmalate + CoA + H(+). The protein operates within amino-acid biosynthesis; L-leucine biosynthesis; L-leucine from 3-methyl-2-oxobutanoate: step 1/4. Its function is as follows. Catalyzes the condensation of the acetyl group of acetyl-CoA with 3-methyl-2-oxobutanoate (2-ketoisovalerate) to form 3-carboxy-3-hydroxy-4-methylpentanoate (2-isopropylmalate). This is 2-isopropylmalate synthase from Vibrio vulnificus (strain CMCP6).